The sequence spans 251 residues: Transmembrane ascorbate-dependent reductase CYB561 (251 aa).

The residue at position 1 (methionine 1) is an N-acetylmethionine. At 1–16 (MEGGAAAATPTALPYY) the chain is on the cytoplasmic side. A helical membrane pass occupies residues 17–37 (VAFSQLLGLTLVAMTGAWLGL). Residues 19–220 (FSQLLGLTLV…FGGAVLYILT (202 aa)) form the Cytochrome b561 domain. Residues 38–51 (YRGGIAWESDLQFN) are Vesicular-facing. The chain crosses the membrane as a helical span at residues 52-72 (AHPLCMVIGLIFLQGNALLVY). Histidine 53, arginine 73, and lysine 80 together coordinate heme b. Residues 73-85 (RVFRNEAKRTTKV) lie on the Cytoplasmic side of the membrane. The L-ascorbate site is built by lysine 80 and lysine 84. A helical transmembrane segment spans residues 86 to 106 (LHGLLHIFALVIALVGLVAVF). Heme b contacts are provided by residues histidine 87, 116-119 (DLYS), and histidine 121. Over 107–124 (DYHRKKGYADLYSLHSWC) the chain is Vesicular. A helical transmembrane segment spans residues 125–145 (GILVFVLYFVQWLVGFSFFLF). The Cytoplasmic portion of the chain corresponds to 146-158 (PGASFSLRSRYRP). Residue arginine 153 coordinates L-ascorbate. The chain crosses the membrane as a helical span at residues 159-179 (QHIFFGATIFLLSVGTALLGL). The heme b site is built by histidine 160 and glutamate 181. The Vesicular portion of the chain corresponds to 180–198 (KEALLFNLGGKYSAFEPEG). A helical transmembrane segment spans residues 199–219 (VLANVLGLLLACFGGAVLYIL). The Cytoplasmic segment spans residues 220-251 (TRADWKRPSQAEEQALSMDFKTLTEGDSPGSQ). Lysine 225 contacts heme b. Residue serine 247 is modified to Phosphoserine.

It depends on heme b as a cofactor. In terms of tissue distribution, expressed in many tissues, in particular the brain especially in the cortex and hippocampus.

The protein localises to the cytoplasmic vesicle. The protein resides in the secretory vesicle. It is found in the chromaffin granule membrane. It catalyses the reaction monodehydro-L-ascorbate radical(out) + L-ascorbate(in) = monodehydro-L-ascorbate radical(in) + L-ascorbate(out). In terms of biological role, transmembrane reductase that uses ascorbate as an electron donor in the cytoplasm and transfers electrons across membranes to reduce monodehydro-L-ascorbate radical in the lumen of secretory vesicles. It is therefore involved the regeneration and homeostasis within secretory vesicles of ascorbate which in turn provides reducing equivalents needed to support the activity of intravesicular enzymes. In Homo sapiens (Human), this protein is Transmembrane ascorbate-dependent reductase CYB561.